A 137-amino-acid chain; its full sequence is Large-conductance mechanosensitive channel (137 aa).

A run of 3 helical transmembrane segments spans residues Val-15–Val-35, Ile-38–Gln-58, and Gly-80–Val-100.

Belongs to the MscL family. In terms of assembly, homopentamer.

The protein localises to the cell inner membrane. Functionally, channel that opens in response to stretch forces in the membrane lipid bilayer. May participate in the regulation of osmotic pressure changes within the cell. This Brucella anthropi (strain ATCC 49188 / DSM 6882 / CCUG 24695 / JCM 21032 / LMG 3331 / NBRC 15819 / NCTC 12168 / Alc 37) (Ochrobactrum anthropi) protein is Large-conductance mechanosensitive channel.